A 1041-amino-acid chain; its full sequence is Serine-repeat antigen protein 6 (1041 aa).

A signal peptide spans 1 to 34; the sequence is MIFFNFKLNRMICPIFFLYIINVLFTQYFIKCEG. Asn84 carries an N-linked (GlcNAc...) asparagine glycan. Low complexity predominate over residues 101–111; the sequence is KVVSSSESGKG. The interval 101–173 is disordered; the sequence is KVVSSSESGK…TESSSETLNK (73 aa). Over residues 114 to 149 the composition is skewed to polar residues; it reads VSHTKVTSEGLSDTQPNVTQSVSSSTHTPGSLDSTM. The N-linked (GlcNAc...) asparagine glycan is linked to Asn130. Low complexity predominate over residues 150-168; sequence STEQHSSVSQSSLPTESSS. N-linked (GlcNAc...) asparagine glycosylation occurs at Asn459. A disordered region spans residues 500–577; the sequence is TLPSESPSES…GDTNYVYDFD (78 aa). A compositionally biased stretch (low complexity) spans 502–515; it reads PSESPSESSSKSDS. Basic and acidic residues predominate over residues 521–545; that stretch reads NDKDKNEDKDDMSKNSKEEFKNDDK. A glycan (N-linked (GlcNAc...) asparagine) is linked at Asn554. Over residues 564-574 the composition is skewed to low complexity; that stretch reads NINNGDTNYVY. Asn583 carries N-linked (GlcNAc...) asparagine glycosylation. Cys654 is an active-site residue. Asn684 is a glycosylation site (N-linked (GlcNAc...) asparagine). Active-site residues include His820 and Asn845. A glycan (N-linked (GlcNAc...) asparagine) is linked at Asn984.

The protein belongs to the peptidase C1 family. In terms of processing, just prior to merozoite egress from host erythrocytes, proteolytically cleaved by SUB1 to generate the active 75kDa form.

The protein localises to the parasitophorous vacuole lumen. It is found in the parasitophorous vacuole membrane. Functionally, cysteine protease which plays an essential role in merozoite egress from host erythrocytes. May cleave host SPTB/beta spectrin and ANK1/ankyrin-1 which disrupts host erythrocyte actin cytoskeleton and leads to host erythrocyte cell membrane rupture. In Plasmodium falciparum, this protein is Serine-repeat antigen protein 6.